A 584-amino-acid chain; its full sequence is 2-succinyl-5-enolpyruvyl-6-hydroxy-3-cyclohexene-1-carboxylate synthase (584 aa).

Belongs to the TPP enzyme family. MenD subfamily. Homodimer. Requires Mg(2+) as cofactor. Mn(2+) is required as a cofactor. The cofactor is thiamine diphosphate.

It carries out the reaction isochorismate + 2-oxoglutarate + H(+) = 5-enolpyruvoyl-6-hydroxy-2-succinyl-cyclohex-3-ene-1-carboxylate + CO2. Its pathway is quinol/quinone metabolism; 1,4-dihydroxy-2-naphthoate biosynthesis; 1,4-dihydroxy-2-naphthoate from chorismate: step 2/7. It functions in the pathway quinol/quinone metabolism; menaquinone biosynthesis. Catalyzes the thiamine diphosphate-dependent decarboxylation of 2-oxoglutarate and the subsequent addition of the resulting succinic semialdehyde-thiamine pyrophosphate anion to isochorismate to yield 2-succinyl-5-enolpyruvyl-6-hydroxy-3-cyclohexene-1-carboxylate (SEPHCHC). In Bacillus cytotoxicus (strain DSM 22905 / CIP 110041 / 391-98 / NVH 391-98), this protein is 2-succinyl-5-enolpyruvyl-6-hydroxy-3-cyclohexene-1-carboxylate synthase.